The following is a 20-amino-acid chain: Photosystem II stability/assembly factor HCF136, chloroplastic (20 aa).

This sequence belongs to the Ycf48 family.

The protein localises to the plastid. The protein resides in the chloroplast thylakoid lumen. Its function is as follows. Essential for photosystem II (PSII) biogenesis; required for assembly of an early intermediate in PSII assembly that includes D2 (psbD) and cytochrome b559. The sequence is that of Photosystem II stability/assembly factor HCF136, chloroplastic from Spinacia oleracea (Spinach).